The following is a 180-amino-acid chain: Outer membrane protein YfaZ (180 aa).

The signal sequence occupies residues 1 to 21 (MKKIALAGLAGMLLVSASVNA).

The protein resides in the cell outer membrane. The protein is Outer membrane protein YfaZ (yfaZ) of Escherichia coli (strain K12).